Here is an 871-residue protein sequence, read N- to C-terminus: Synaptonemal complex protein 1 (871 aa).

Residues 1 to 40 (MQKLGFPAMKSLDKPRSLSGSANMYSFSNRKPPDSVSSGS) form a disordered region. Residues 18–40 (LSGSANMYSFSNRKPPDSVSSGS) are compositionally biased toward polar residues. 2 coiled-coil regions span residues 58-304 (MRTD…DKKN) and 331-608 (LALD…EESK). 2 disordered regions span residues 708–741 (VMSD…RSEH) and 778–871 (SVLS…YAFD). The segment covering 719-728 (VNSNKNYSIS) has biased composition (polar residues). Basic and acidic residues predominate over residues 729-741 (KDSRLGGSKRSEH). The span at 831–847 (LTPQSIAKGTGMTSHAR) shows a compositional bias: polar residues.

It localises to the nucleus. Its function is as follows. Required for chromosome synapsis and normal fidelity of crossing over. The protein is Synaptonemal complex protein 1 (ZYP1A) of Arabidopsis thaliana (Mouse-ear cress).